We begin with the raw amino-acid sequence, 235 residues long: Succinate dehydrogenase iron-sulfur subunit (235 aa).

Residues Cys-53, Cys-58, and Cys-73 each contribute to the [2Fe-2S] cluster site. The region spanning 133–163 (ERAKLDGLYECILCACCSSSCPSYWWNPDKF) is the 4Fe-4S ferredoxin-type domain. The [4Fe-4S] cluster site is built by Cys-143, Cys-146, and Cys-149. Position 153 (Cys-153) interacts with [3Fe-4S] cluster. An a ubiquinone-binding site is contributed by Trp-158. [3Fe-4S] cluster is bound by residues Cys-200 and Cys-206. Cys-210 lines the [4Fe-4S] cluster pocket.

The protein belongs to the succinate dehydrogenase/fumarate reductase iron-sulfur protein family. Part of an enzyme complex containing four subunits: a flavoprotein, an iron-sulfur protein, cytochrome b-556 and a hydrophobic protein. It depends on [2Fe-2S] cluster as a cofactor. [3Fe-4S] cluster serves as cofactor. Requires [4Fe-4S] cluster as cofactor.

It carries out the reaction a quinone + succinate = fumarate + a quinol. It functions in the pathway carbohydrate metabolism; tricarboxylic acid cycle; fumarate from succinate (bacterial route): step 1/1. The protein is Succinate dehydrogenase iron-sulfur subunit (sdhB) of Coxiella burnetii (strain RSA 493 / Nine Mile phase I).